Consider the following 165-residue polypeptide: NADH-ubiquinone oxidoreductase chain 6 (165 aa).

A run of 4 helical transmembrane segments spans residues 1–21, 47–67, 83–103, and 130–150; these read MVVY…FYSL, SFVP…VFPY, GEVV…FDNF, and GVLV…ALII.

It belongs to the complex I subunit 6 family.

The protein localises to the mitochondrion membrane. It catalyses the reaction a ubiquinone + NADH + 5 H(+)(in) = a ubiquinol + NAD(+) + 4 H(+)(out). Functionally, core subunit of the mitochondrial membrane respiratory chain NADH dehydrogenase (Complex I) that is believed to belong to the minimal assembly required for catalysis. Complex I functions in the transfer of electrons from NADH to the respiratory chain. The immediate electron acceptor for the enzyme is believed to be ubiquinone. The polypeptide is NADH-ubiquinone oxidoreductase chain 6 (ND6) (Strongylocentrotus purpuratus (Purple sea urchin)).